A 576-amino-acid chain; its full sequence is Peroxisomal targeting signal receptor (576 aa).

Cys-10 participates in a covalent cross-link: Glycyl cysteine thioester (Cys-Gly) (interchain with G-Cter in ubiquitin). Residues 11–33 form an amphipathic helix 1 (AH1) region; sequence AAGSNPLAQFTKHTQHDTSLQQS. Lys-22 participates in a covalent cross-link: Glycyl lysine isopeptide (Lys-Gly) (interchain with G-Cter in ubiquitin). The amphipathic helix 2 (AH2) stretch occupies residues 58-75; the sequence is RQQMDQFMQQQNNPAFNF. Short sequence motifs (wxxxF/Y motif) lie at residues 100 to 104 and 128 to 132; these read WNQEF and WAQDF. Positions 176–195 are disordered; that stretch reads AQMQQQNPAQAQTSEQSQTQ. The short motif at 196–200 is the WxxxF/Y motif 3 element; it reads WEDQF. The amphipathic helix 4 (AH4) stretch occupies residues 224–240; it reads FEQVWDDIQVSYADVEL. The short motif at 249-253 is the WxxxF/Y motif 4 element; it reads WEKDF. TPR repeat units follow at residues 278–311, 312–345, 346–383, 384–421, 422–455, 456–489, and 490–523; these read PDAYEIGMRLMESGAKLSEAGLAFEAAVQQDPKH, VDAWLKLGEVQTQNEKESDGIAALEKCLELDPTN, LAALMTLAISYINDGYDNAAYATLERWIETKYPDIASR, ARSSNPDLDGGDRIEQNKRVTELFMKAAQLSPDVASMD, ADVQTGLGVLFYSMEEFDKTIDCFKAAIEVEPDK, ALNWNRLGAALANYNKPEEAVEAYSRALQLNPNF, and VRARYNLGVSFINMGRYKEAVEHLLTGISLHEVE.

The protein belongs to the peroxisomal targeting signal receptor family. Interacts (via WxxxF/Y and LVxEF motifs) with PEX14; promoting translocation through the PEX13-PEX14 docking complex. Interacts with PEX8. A disulfide bond is created between Cys-10 and Cys-338 or Cys-444. In terms of processing, monoubiquitinated at Cys-10 by PEX2 during PEX5 passage through the retrotranslocation channel: monoubiquitination acts as a signal for PEX5 extraction and is required for proper export from peroxisomes and recycling. When PEX5 recycling is compromised, polyubiquitinated at Lys-22 by PEX10 during its passage through the retrotranslocation channel, leading to its degradation.

It is found in the peroxisome membrane. The protein localises to the cytoplasm. Its subcellular location is the cytosol. It localises to the peroxisome matrix. Its function is as follows. Receptor that mediates peroxisomal import of proteins containing a C-terminal PTS1-type tripeptide peroxisomal targeting signal (SKL-type). Binds to cargo proteins containing a PTS1 peroxisomal targeting signal in the cytosol, and translocates them into the peroxisome matrix by passing through the peroxisomal docking complex along with cargo proteins. PEX5 receptor is then retrotranslocated into the cytosol, leading to release of bound cargo in the peroxisome matrix, and reset for a subsequent peroxisome import cycle. Required for PEX7 ubiquitination. The chain is Peroxisomal targeting signal receptor from Komagataella phaffii (strain GS115 / ATCC 20864) (Yeast).